Reading from the N-terminus, the 599-residue chain is PR domain zinc finger protein 5 (599 aa).

The region spanning 8 to 124 is the SET domain; that stretch reads DRFALKSSRV…TDTELLIGYL (117 aa). C2H2-type zinc fingers lie at residues 167-190, 199-221, 231-256, 264-286, 289-311, 317-339, 345-367, 373-395, 401-424, 430-452, 458-480, and 486-508; these read FACP…QSLH, FKCE…FEQH, FVCK…ENVH, LICS…RKIH, FDCQ…MITH, YNCE…KVIH, YQCK…KKTH, FQCD…LLIH, FKCH…QVVH, YRCE…KKTH, KVCP…IRSH, and YQCP…IRTH. The C2H2-type 13; degenerate zinc finger occupies 514-536; sequence YQCSECSKAFSQKRGLDEHKRTH. C2H2-type zinc fingers lie at residues 542 to 564 and 571 to 594; these read FQCD…KMTH and AECH…DNIH.

This sequence belongs to the class V-like SAM-binding methyltransferase superfamily. Interacts with EHMT2/G9A, GFI1 and HDAC1.

It is found in the nucleus. Sequence-specific DNA-binding transcription factor. Represses transcription at least in part by recruitment of the histone methyltransferase EHMT2/G9A and histone deacetylases such as HDAC1. Regulates hematopoiesis-associated protein-coding and microRNA (miRNA) genes. May regulate the expression of proteins involved in extracellular matrix development and maintenance, connective tissue components and molecules regulating cell migration and adhesion. May cause G2/M arrest and apoptosis in cancer cells. This is PR domain zinc finger protein 5 (Prdm5) from Mus musculus (Mouse).